The primary structure comprises 140 residues: RNA silencing suppressor (140 aa).

The tract at residues Arg73 to Arg76 is basic. 2 consecutive C4-type zinc fingers follow at residues Cys83–Cys98 and Cys83–Cys103.

This sequence belongs to the carlaviruses nucleic acid-binding protein family.

In terms of biological role, suppressor of viral-induced RNA silencing. The potential mechanism of action is based on sequestering siRNAs. The sequence is that of RNA silencing suppressor from Lily symptomless virus (LSV).